The primary structure comprises 500 residues: ATP synthase subunit alpha (500 aa).

168 to 175 provides a ligand contact to ATP; it reads GDRQTGKT.

Belongs to the ATPase alpha/beta chains family. As to quaternary structure, F-type ATPases have 2 components, CF(1) - the catalytic core - and CF(0) - the membrane proton channel. CF(1) has five subunits: alpha(3), beta(3), gamma(1), delta(1), epsilon(1). CF(0) has three main subunits: a(1), b(2) and c(9-12). The alpha and beta chains form an alternating ring which encloses part of the gamma chain. CF(1) is attached to CF(0) by a central stalk formed by the gamma and epsilon chains, while a peripheral stalk is formed by the delta and b chains.

It localises to the cell membrane. The catalysed reaction is ATP + H2O + 4 H(+)(in) = ADP + phosphate + 5 H(+)(out). Its function is as follows. Produces ATP from ADP in the presence of a proton gradient across the membrane. The alpha chain is a regulatory subunit. The chain is ATP synthase subunit alpha from Streptococcus suis (strain 98HAH33).